The chain runs to 331 residues: 6-phosphogluconolactonase (331 aa).

This sequence belongs to the cycloisomerase 2 family.

The catalysed reaction is 6-phospho-D-glucono-1,5-lactone + H2O = 6-phospho-D-gluconate + H(+). It participates in carbohydrate degradation; pentose phosphate pathway; D-ribulose 5-phosphate from D-glucose 6-phosphate (oxidative stage): step 2/3. Catalyzes the hydrolysis of 6-phosphogluconolactone to 6-phosphogluconate. In Salmonella typhi, this protein is 6-phosphogluconolactonase.